A 438-amino-acid polypeptide reads, in one-letter code: Phosphoribosylamine--glycine ligase (438 aa).

The 209-residue stretch at Arg-108 to Glu-316 folds into the ATP-grasp domain. Ile-135–Thr-194 serves as a coordination point for ATP. Mg(2+)-binding residues include Gln-274, Glu-286, and Asn-288. Residues Gln-274, Glu-286, and Asn-288 each coordinate Mn(2+).

The protein belongs to the GARS family. Requires Mg(2+) as cofactor. The cofactor is Mn(2+).

The enzyme catalyses 5-phospho-beta-D-ribosylamine + glycine + ATP = N(1)-(5-phospho-beta-D-ribosyl)glycinamide + ADP + phosphate + H(+). Its pathway is purine metabolism; IMP biosynthesis via de novo pathway; N(1)-(5-phospho-D-ribosyl)glycinamide from 5-phospho-alpha-D-ribose 1-diphosphate: step 2/2. The protein is Phosphoribosylamine--glycine ligase of Pyrococcus horikoshii (strain ATCC 700860 / DSM 12428 / JCM 9974 / NBRC 100139 / OT-3).